We begin with the raw amino-acid sequence, 534 residues long: Calcium-dependent protein kinase 18 (534 aa).

The tract at residues 1–49 (MGLCFSSPKATRRGTGSRNPNPDSPTQGKASEKVSNKNKKNTKKIQLRH) is disordered. G2 carries N-myristoyl glycine lipidation. Residues 14 to 29 (GTGSRNPNPDSPTQGK) show a composition bias toward polar residues. Positions 36-47 (NKNKKNTKKIQL) are enriched in basic residues. In terms of domain architecture, Protein kinase spans 71 to 331 (YTIGKLLGHG…AAQALSHSWV (261 aa)). ATP-binding positions include 77–85 (LGHGQFGFT) and K100. Catalysis depends on D197, which acts as the Proton acceptor. At S237 the chain carries Phosphoserine. An autoinhibitory domain region spans residues 337–367 (ASEVPIDISVLNNMRQFVKFSRLKQIALRAL). EF-hand domains are found at residues 374–409 (DELDDLRDQFDAIDIDKNGSISLEEMRQALAKDVPW), 411–446 (LKDARVAEILQANDSNTDGLVDFTEFVVAALHVNQL), 453–488 (KWQQRSRAAFDKFDIDGDGFITPEELRLQTGLKGSI), and 491–518 (LLEEADVDEDGRISINEFRRLLRSASLK). Ca(2+)-binding residues include D387, D389, N391, S393, E398, D424, N426, D428, E435, D466, D468, D470, E477, D496, D498, D500, and R502. S504 carries the post-translational modification Phosphoserine. Ca(2+) is bound at residue E507.

The protein belongs to the protein kinase superfamily. Ser/Thr protein kinase family. CDPK subfamily.

The protein localises to the membrane. It catalyses the reaction L-seryl-[protein] + ATP = O-phospho-L-seryl-[protein] + ADP + H(+). The enzyme catalyses L-threonyl-[protein] + ATP = O-phospho-L-threonyl-[protein] + ADP + H(+). With respect to regulation, activated by calcium. Autophosphorylation may play an important role in the regulation of the kinase activity. Functionally, may play a role in signal transduction pathways that involve calcium as a second messenger. The polypeptide is Calcium-dependent protein kinase 18 (CPK18) (Arabidopsis thaliana (Mouse-ear cress)).